Here is a 430-residue protein sequence, read N- to C-terminus: Serine--tRNA ligase (430 aa).

L-serine is bound at residue 236–238 (TAE). 267–269 (RSE) contacts ATP. Glutamate 290 contributes to the L-serine binding site. 354 to 357 (EISS) is an ATP binding site. Serine 390 contributes to the L-serine binding site.

Belongs to the class-II aminoacyl-tRNA synthetase family. Type-1 seryl-tRNA synthetase subfamily. Homodimer. The tRNA molecule binds across the dimer.

It is found in the cytoplasm. The enzyme catalyses tRNA(Ser) + L-serine + ATP = L-seryl-tRNA(Ser) + AMP + diphosphate + H(+). It catalyses the reaction tRNA(Sec) + L-serine + ATP = L-seryl-tRNA(Sec) + AMP + diphosphate + H(+). It participates in aminoacyl-tRNA biosynthesis; selenocysteinyl-tRNA(Sec) biosynthesis; L-seryl-tRNA(Sec) from L-serine and tRNA(Sec): step 1/1. Catalyzes the attachment of serine to tRNA(Ser). Is also able to aminoacylate tRNA(Sec) with serine, to form the misacylated tRNA L-seryl-tRNA(Sec), which will be further converted into selenocysteinyl-tRNA(Sec). In Mannheimia succiniciproducens (strain KCTC 0769BP / MBEL55E), this protein is Serine--tRNA ligase.